Consider the following 325-residue polypeptide: Proto-oncogene Mas (325 aa).

The Extracellular portion of the chain corresponds to 1–36 (MDGSNVTSFVVEEPTNISTGRNASVGNAHRQIPIVH). N-linked (GlcNAc...) asparagine glycans are attached at residues asparagine 5, asparagine 16, and asparagine 22. Residues 37 to 61 (WVIMSISPVGFVENGILLWFLCFRM) form a helical membrane-spanning segment. Residues 62 to 65 (RRNP) are Cytoplasmic-facing. Residues 66-86 (FTVYITHLSIADISLLFCIFI) traverse the membrane as a helical segment. Topologically, residues 87–104 (LSIDYALDYELSSGHYYT) are extracellular. Residues 105–128 (IVTLSVTFLFGYNTGLYLLTAISV) form a helical membrane-spanning segment. Topologically, residues 129–149 (ERCLSVLYPIWYRCHRPKYQS) are cytoplasmic. Residues 150–172 (ALVCALLWALSCLVTTMEYVMCI) form a helical membrane-spanning segment. Residues 173 to 185 (DREEESHSRNDCR) lie on the Extracellular side of the membrane. A helical transmembrane segment spans residues 186–206 (AVIIFIAILSFLVFTPLMLVS). Residues 207-224 (STILVVKIRKNTWASHSS) are Cytoplasmic-facing. Residues 225 to 245 (KLYIVIMVTIIIFLIFAMPMR) traverse the membrane as a helical segment. At 246–263 (LLYLLYYEYWSTFGNLHH) the chain is on the extracellular side. The chain crosses the membrane as a helical span at residues 264–284 (ISLLFSTINSSANPFIYFFVG). At 285–325 (SSKKKRFKESLKVVLTRAFKDEMQPRRQKDNCNTVTVETVV) the chain is on the cytoplasmic side.

It belongs to the G-protein coupled receptor 1 family. Interacts with AGTR1. Interacts with FLNA (via filamin repeat 21); increases PKA-mediated phosphorylation of FLNA.

Its subcellular location is the cell membrane. Functionally, receptor for angiotensin 1-7. Acts specifically as a functional antagonist of AGTR1 (angiotensin-2 type 1 receptor), although it up-regulates AGTR1 receptor levels. Positive regulation of AGTR1 levels occurs through activation of the G-proteins GNA11 and GNAQ, and stimulation of the protein kinase C signaling cascade. The antagonist effect on AGTR1 function is probably due to AGTR1 being physically altered by MAS1. In Homo sapiens (Human), this protein is Proto-oncogene Mas (MAS1).